Here is a 473-residue protein sequence, read N- to C-terminus: MAQLEGYCFSAALSCTFLVSCLLFSAFSRALREPYMDEIFHLPQAQRYCEGHFSLSQWDPMITTLPGLYLVSVGVVKPAIWIFAWSEHVVCSIGMLRFVNLLFSVGNFYLLYLLFHKVQPRNKAASSIQRVLSTLTLAVFPTLYFFNFLYYTEAGSMFFTLFAYLMCLYGNHKTSAFLGFCGFMFRQTNIIWAVFCAGNVIAQKLTEAWKTELQKKEDRLPPIKGPFAEFRKILQFLLAYSMSFKNLSMLFCLTWPYILLGFLFCAFVVVNGGIVIGDRSSHEACLHFPQLFYFFSFTLFFSFPHLLSPSKIKTFLSLVWKHGILFLVVTLVSVFLVWKFTYAHKYLLADNRHYTFYVWKRVFQRYAILKYLLVPAYIFAGWSIADSLKSKPIFWNLMFFICLFIVIVPQKLLEFRYFILPYVIYRLNITLPPTSRLVCELSCYAIVNFITFYIFLNKTFQWPNSQDIQRFMW.

Topologically, residues 1 to 6 (MAQLEG) are cytoplasmic. Residues 7–27 (YCFSAALSCTFLVSCLLFSAF) traverse the membrane as a helical segment. Over 28 to 64 (SRALREPYMDEIFHLPQAQRYCEGHFSLSQWDPMITT) the chain is Extracellular. Residues 65-85 (LPGLYLVSVGVVKPAIWIFAW) traverse the membrane as a helical segment. The Cytoplasmic portion of the chain corresponds to 86–97 (SEHVVCSIGMLR). Residues 98 to 118 (FVNLLFSVGNFYLLYLLFHKV) traverse the membrane as a helical segment. At 119–126 (QPRNKAAS) the chain is on the extracellular side. The chain crosses the membrane as a helical span at residues 127-147 (SIQRVLSTLTLAVFPTLYFFN). The Cytoplasmic segment spans residues 148–150 (FLY). Residues 151–171 (YTEAGSMFFTLFAYLMCLYGN) traverse the membrane as a helical segment. Residues 172–175 (HKTS) lie on the Extracellular side of the membrane. Residues 176–196 (AFLGFCGFMFRQTNIIWAVFC) form a helical membrane-spanning segment. Residues 197-256 (AGNVIAQKLTEAWKTELQKKEDRLPPIKGPFAEFRKILQFLLAYSMSFKNLSMLFCLTWP) are Cytoplasmic-facing. Residues 257–277 (YILLGFLFCAFVVVNGGIVIG) form a helical membrane-spanning segment. Topologically, residues 278-283 (DRSSHE) are extracellular. The helical transmembrane segment at 284-304 (ACLHFPQLFYFFSFTLFFSFP) threads the bilayer. Over 305–317 (HLLSPSKIKTFLS) the chain is Cytoplasmic. A helical transmembrane segment spans residues 318–338 (LVWKHGILFLVVTLVSVFLVW). Residues 339–365 (KFTYAHKYLLADNRHYTFYVWKRVFQR) are Extracellular-facing. Residues 366-386 (YAILKYLLVPAYIFAGWSIAD) traverse the membrane as a helical segment. Topologically, residues 387–392 (SLKSKP) are cytoplasmic. A helical membrane pass occupies residues 393-413 (IFWNLMFFICLFIVIVPQKLL). The Extracellular segment spans residues 414–436 (EFRYFILPYVIYRLNITLPPTSR). A helical membrane pass occupies residues 437 to 457 (LVCELSCYAIVNFITFYIFLN). Residues 458–473 (KTFQWPNSQDIQRFMW) are Cytoplasmic-facing.

The protein belongs to the ALG10 glucosyltransferase family. In terms of assembly, interacts with KCNH1; may regulate KCNH1, possibly by regulating its N-glycosylation. Interacts with KCNH2; may reduce KCNH2 sensitivity to classic proarrhythmic drug blockade, possibly by regulating its N-glycosylation. Highly expressed in heart, placenta, liver, kidney and pancreas. Weakly expressed in lung, skeletal muscle and brain.

The protein localises to the endoplasmic reticulum membrane. The enzyme catalyses an alpha-D-Glc-(1-&gt;3)-alpha-D-Glc-(1-&gt;3)-alpha-D-Man-(1-&gt;2)-alpha-D-Man-(1-&gt;2)-alpha-D-Man-(1-&gt;3)-[alpha-D-Man-(1-&gt;2)-alpha-D-Man-(1-&gt;3)-[alpha-D-Man-(1-&gt;2)-alpha-D-Man-(1-&gt;6)]-alpha-D-Man-(1-&gt;6)]-beta-D-Man-(1-&gt;4)-beta-D-GlcNAc-(1-&gt;4)-alpha-D-GlcNAc-diphospho-di-trans,poly-cis-dolichol + a di-trans,poly-cis-dolichyl beta-D-glucosyl phosphate = a alpha-D-Glc-(1-&gt;2)-alpha-D-Glc-(1-&gt;3)-alpha-D-Glc-(1-&gt;3)-alpha-D-Man-(1-&gt;2)-alpha-D-Man-(1-&gt;2)-alpha-D-Man-(1-&gt;3)-[alpha-D-Man-(1-&gt;2)-alpha-D-Man-(1-&gt;3)-[alpha-D-Man-(1-&gt;2)-alpha-D-Man-(1-&gt;6)]-alpha-D-Man-(1-&gt;6)]-beta-D-Man-(1-&gt;4)-beta-D-GlcNAc-(1-&gt;4)-alpha-D-GlcNAc-diphospho-di-trans,poly-cis-dolichol + a di-trans,poly-cis-dolichyl phosphate + H(+). It functions in the pathway protein modification; protein glycosylation. Dol-P-Glc:Glc(2)Man(9)GlcNAc(2)-PP-Dol alpha-1,2-glucosyltransferase that operates in the biosynthetic pathway of dolichol-linked oligosaccharides, the glycan precursors employed in protein asparagine (N)-glycosylation. The assembly of dolichol-linked oligosaccharides begins on the cytosolic side of the endoplasmic reticulum membrane and finishes in its lumen. The sequential addition of sugars to dolichol pyrophosphate produces dolichol-linked oligosaccharides containing fourteen sugars, including two GlcNAcs, nine mannoses and three glucoses. Once assembled, the oligosaccharide is transferred from the lipid to nascent proteins by oligosaccharyltransferases. In the lumen of the endoplasmic reticulum, adds the third and last glucose residue from dolichyl phosphate glucose (Dol-P-Glc) onto the lipid-linked oligosaccharide intermediate Glc(2)Man(9)GlcNAc(2)-PP-Dol to produce Glc(3)Man(9)GlcNAc(2)-PP-Dol. This is Dol-P-Glc:Glc(2)Man(9)GlcNAc(2)-PP-Dol alpha-1,2-glucosyltransferase from Homo sapiens (Human).